The following is a 901-amino-acid chain: Probable inorganic carbon transporter subunit DabA (901 aa).

Zn(2+)-binding residues include Cys424, Asp426, His606, and Cys621.

The protein belongs to the inorganic carbon transporter (TC 9.A.2) DabA family. In terms of assembly, forms a complex with DabB. Zn(2+) serves as cofactor.

Its subcellular location is the cell membrane. Part of an energy-coupled inorganic carbon pump. The sequence is that of Probable inorganic carbon transporter subunit DabA from Staphylococcus aureus (strain MRSA252).